The following is a 556-amino-acid chain: Arginine--tRNA ligase (556 aa).

Residues 132–142 carry the 'HIGH' region motif; sequence ANPTGDLHLGH.

It belongs to the class-I aminoacyl-tRNA synthetase family. Monomer.

The protein resides in the cytoplasm. It carries out the reaction tRNA(Arg) + L-arginine + ATP = L-arginyl-tRNA(Arg) + AMP + diphosphate. This is Arginine--tRNA ligase from Bacillus cereus (strain ATCC 14579 / DSM 31 / CCUG 7414 / JCM 2152 / NBRC 15305 / NCIMB 9373 / NCTC 2599 / NRRL B-3711).